Reading from the N-terminus, the 187-residue chain is Elongation factor P (187 aa).

At Lys-34 the chain carries N6-(3,6-diaminohexanoyl)-5-hydroxylysine.

It belongs to the elongation factor P family. May be beta-lysylated on the epsilon-amino group of Lys-34 by the combined action of EpmA and EpmB, and then hydroxylated on the C5 position of the same residue by EpmC (if this protein is present). Lysylation is critical for the stimulatory effect of EF-P on peptide-bond formation. The lysylation moiety may extend toward the peptidyltransferase center and stabilize the terminal 3-CCA end of the tRNA. Hydroxylation of the C5 position on Lys-34 may allow additional potential stabilizing hydrogen-bond interactions with the P-tRNA.

The protein localises to the cytoplasm. Its pathway is protein biosynthesis; polypeptide chain elongation. Functionally, involved in peptide bond synthesis. Alleviates ribosome stalling that occurs when 3 or more consecutive Pro residues or the sequence PPG is present in a protein, possibly by augmenting the peptidyl transferase activity of the ribosome. Modification of Lys-34 is required for alleviation. The polypeptide is Elongation factor P (Thioalkalivibrio sulfidiphilus (strain HL-EbGR7)).